A 205-amino-acid polypeptide reads, in one-letter code: Protein TON_1965 (205 aa).

Residues 7-201 (EWGEFLVRLA…EEYPKGPVKR (195 aa)) form the AMMECR1 domain.

This Thermococcus onnurineus (strain NA1) protein is Protein TON_1965.